Reading from the N-terminus, the 433-residue chain is Protein root UVB sensitive 2, chloroplastic (433 aa).

Belongs to the RUS1 family. As to quaternary structure, interacts (via the DUF647 domain) with RUS1 (via the DUF647 domain). Expressed throughout the plant, with a higher expression near the root apical meristem, in the cortex region of the root elongation zone, in lateral roots and emerging lateral roots. Not detected in extreme root apical meristem or root cap.

It localises to the plastid. In terms of biological role, involved in a root UV-B sensing pathway and in the protection against the hypersensitivity to very low-fluence-rate (VLF) UV-B. RSU1 and RUS2 are probably both negative modulators of the same UV-B perception pathway, which when overstimulated in the roots causes a block to postgermination development. Required for polar auxin transport and to maintain the normal levels of PIN proteins in the root. This chain is Protein root UVB sensitive 2, chloroplastic, found in Arabidopsis thaliana (Mouse-ear cress).